The primary structure comprises 227 residues: MLTVPGLCWLCRMPLALSHWGICSVCARAVRQRVSLCPQCGLPAGHPSLPCGRCLQKPPPWQRLVSVSDYTPPLSLLVHQLKFTRRSEIAAALARLLLQEVLMARRSTGLPLPDRIVSVPLWSRRHWRRGFNQSDLLCQPLAHWLGCAWDSQTITRVRATATQHHLSARLRKRNLKNAFRLELPVQGLHMVIVDDVVTTGSTVAEIAQLLLRNGAATVQVWCLCRTL.

The protein belongs to the ComF/GntX family.

In terms of biological role, could be involved in gluconate metabolism. The polypeptide is DNA utilization protein YhgH (gntX) (Salmonella typhi).